A 451-amino-acid polypeptide reads, in one-letter code: tRNA modification GTPase MnmE (451 aa).

The (6S)-5-formyl-5,6,7,8-tetrahydrofolate site is built by Arg-25, Glu-82, and Lys-121. Positions 217–374 (GMSVVILGRP…LKQHLKTEMG (158 aa)) constitute a TrmE-type G domain. Asn-227 lines the K(+) pocket. GTP-binding positions include 227-232 (NAGKSS), 246-252 (TDIAGTT), and 271-274 (DTAG). Ser-231 provides a ligand contact to Mg(2+). The K(+) site is built by Thr-246, Ile-248, and Thr-251. Thr-252 contacts Mg(2+). Lys-451 serves as a coordination point for (6S)-5-formyl-5,6,7,8-tetrahydrofolate.

Belongs to the TRAFAC class TrmE-Era-EngA-EngB-Septin-like GTPase superfamily. TrmE GTPase family. Homodimer. Heterotetramer of two MnmE and two MnmG subunits. Requires K(+) as cofactor.

It is found in the cytoplasm. Its function is as follows. Exhibits a very high intrinsic GTPase hydrolysis rate. Involved in the addition of a carboxymethylaminomethyl (cmnm) group at the wobble position (U34) of certain tRNAs, forming tRNA-cmnm(5)s(2)U34. This chain is tRNA modification GTPase MnmE, found in Hydrogenovibrio crunogenus (strain DSM 25203 / XCL-2) (Thiomicrospira crunogena).